Here is a 310-residue protein sequence, read N- to C-terminus: N-acetyl-gamma-glutamyl-phosphate reductase (310 aa).

C117 is an active-site residue.

It belongs to the NAGSA dehydrogenase family. Type 2 subfamily.

Its subcellular location is the cytoplasm. It carries out the reaction N-acetyl-L-glutamate 5-semialdehyde + phosphate + NADP(+) = N-acetyl-L-glutamyl 5-phosphate + NADPH + H(+). It functions in the pathway amino-acid biosynthesis; L-arginine biosynthesis; N(2)-acetyl-L-ornithine from L-glutamate: step 3/4. Its function is as follows. Catalyzes the NADPH-dependent reduction of N-acetyl-5-glutamyl phosphate to yield N-acetyl-L-glutamate 5-semialdehyde. This chain is N-acetyl-gamma-glutamyl-phosphate reductase, found in Rhizobium rhizogenes (strain K84 / ATCC BAA-868) (Agrobacterium radiobacter).